A 398-amino-acid chain; its full sequence is Lysophosphatidylserine lipase ABHD12 (398 aa).

A compositionally biased stretch (basic and acidic residues) spans 1-16; it reads MRKRTEPVALEHERRT. A disordered region spans residues 1-24; it reads MRKRTEPVALEHERRTASGSPSAG. The Cytoplasmic portion of the chain corresponds to 1–74; that stretch reads MRKRTEPVAL…RKGLCFRLRK (74 aa). Residues 75–95 form a helical membrane-spanning segment; the sequence is ILFFVLGLYVAIPFLIKLCPG. At 96 to 398 the chain is on the extracellular side; the sequence is IQAKLIFLNF…LGKSEPGRQH (303 aa). Residue asparagine 123 is glycosylated (N-linked (GlcNAc...) asparagine). Serine 246 acts as the Nucleophile in catalysis. Active-site charge relay system residues include aspartate 333 and histidine 372.

Belongs to the serine esterase family.

The protein localises to the endoplasmic reticulum membrane. It catalyses the reaction 1-(9Z-octadecenoyl)-sn-glycero-3-phospho-L-serine + H2O = sn-glycero-3-phospho-L-serine + (9Z)-octadecenoate + H(+). It carries out the reaction 1-(9Z-octadecenoyl)-sn-glycero-3-phospho-(1'-sn-glycerol) + H2O = sn-glycero-3-phospho-(1'-sn-glycerol) + (9Z)-octadecenoate + H(+). The enzyme catalyses 1-(9Z-octadecenoyl)-sn-glycero-3-phospho-(1D-myo-inositol) + H2O = sn-glycero-3-phospho-1D-myo-inositol + (9Z)-octadecenoate + H(+). The catalysed reaction is 1-(9Z-octadecenoyl)-sn-glycero-3-phosphoethanolamine + H2O = sn-glycero-3-phosphoethanolamine + (9Z)-octadecenoate + H(+). It catalyses the reaction 1-(9Z-octadecenoyl)-sn-glycero-3-phosphocholine + H2O = 1-(9Z-octadecenoyl)-sn-glycerol + phosphocholine + H(+). It carries out the reaction 2-(9Z-octadecenoyl)-glycerol + H2O = glycerol + (9Z)-octadecenoate + H(+). The enzyme catalyses 1-hexadecanoyl-sn-glycero-3-phospho-L-serine + H2O = sn-glycero-3-phospho-L-serine + hexadecanoate + H(+). The catalysed reaction is 2-(5Z,8Z,11Z,14Z-eicosatetraenoyl)-glycerol + H2O = glycerol + (5Z,8Z,11Z,14Z)-eicosatetraenoate + H(+). It catalyses the reaction Hydrolyzes glycerol monoesters of long-chain fatty acids.. It carries out the reaction 1-decanoylglycerol + H2O = decanoate + glycerol + H(+). The enzyme catalyses 1-dodecanoylglycerol + H2O = dodecanoate + glycerol + H(+). The catalysed reaction is 1-tetradecanoylglycerol + H2O = tetradecanoate + glycerol + H(+). It catalyses the reaction 2-hexadecanoylglycerol + H2O = glycerol + hexadecanoate + H(+). It carries out the reaction 1-(9Z-octadecenoyl)-glycerol + H2O = glycerol + (9Z)-octadecenoate + H(+). The enzyme catalyses 2-(9Z,12Z-octadecadienoyl)-glycerol + H2O = (9Z,12Z)-octadecadienoate + glycerol + H(+). The catalysed reaction is 1-(5Z,8Z,11Z,14Z-eicosatetraenoyl)-glycerol + H2O = glycerol + (5Z,8Z,11Z,14Z)-eicosatetraenoate + H(+). It catalyses the reaction 1-(9Z,12Z-octadecadienoyl)-glycerol + H2O = (9Z,12Z)-octadecadienoate + glycerol + H(+). It carries out the reaction 1-hexadecanoylglycerol + H2O = glycerol + hexadecanoate + H(+). The enzyme catalyses 1-octadecanoylglycerol + H2O = octadecanoate + glycerol + H(+). The catalysed reaction is 1-octadecanoyl-2-(9,10-epoxyoctadecanoyl)-sn-glycero-3-phospho-L-serine + H2O = 9,10-epoxyoctadecanoate + 1-octadecanoyl-sn-glycero-3-phosphoserine + H(+). It catalyses the reaction 1-octadecanoyl-2-(10-hydroxyoctadecanoyl)-sn-glycero-3-phospho-L-serine + H2O = 1-octadecanoyl-sn-glycero-3-phosphoserine + 10-hydroxyoctadecanoate + H(+). It carries out the reaction 1-hexadecanoyl-2-(10-hydroxyoctadecanoyl)-sn-glycero-3-phospho-L-serine + H2O = 10-hydroxyoctadecanoate + 1-hexadecanoyl-sn-glycero-3-phospho-L-serine + H(+). Its function is as follows. Lysophosphatidylserine (LPS) lipase that mediates the hydrolysis of lysophosphatidylserine, a class of signaling lipids that regulates immunological and neurological processes. Represents a major lysophosphatidylserine lipase in the brain, thereby playing a key role in the central nervous system. Also able to hydrolyze oxidized phosphatidylserine; oxidized phosphatidylserine is produced in response to severe inflammatory stress and constitutes a proapoptotic 'eat me' signal. Also has monoacylglycerol (MAG) lipase activity: hydrolyzes 2-arachidonoylglycerol (2-AG), thereby acting as a regulator of endocannabinoid signaling pathways. Has a strong preference for very-long-chain lipid substrates; substrate specificity is likely due to improved catalysis and not improved substrate binding. The sequence is that of Lysophosphatidylserine lipase ABHD12 from Bos taurus (Bovine).